The chain runs to 246 residues: MGAVTVRGLRRAFGSHVVLDQLDLTIAESEFVALVGRSGGGKTTLLRTLAGLDPVAEGSVEVPALRSVVFQEPRLLPWRRVWQNVALGLPRSRGRDEATKALAEVGLADHARAWPLTLSGGEAQRVALARALVREPELLLLDEPFGALDALTRIHMHALVRQLHERHRPAVLLVTHDVDEALELADRVIVLRDGRLDEQIETRELFDDRRDPRFEQARARLLGLLGVTDTHVADPTATPSSAATAP.

Positions 4-218 constitute an ABC transporter domain; the sequence is VTVRGLRRAF…RRDPRFEQAR (215 aa). An ATP-binding site is contributed by 36–43; that stretch reads GRSGGGKT.

It belongs to the ABC transporter superfamily. Aliphatic sulfonates importer (TC 3.A.1.17.2) family. The complex is composed of two ATP-binding proteins (SsuB), two transmembrane proteins (SsuC) and a solute-binding protein (SsuA).

Its subcellular location is the cell membrane. It catalyses the reaction ATP + H2O + aliphatic sulfonate-[sulfonate-binding protein]Side 1 = ADP + phosphate + aliphatic sulfonateSide 2 + [sulfonate-binding protein]Side 1.. Part of the ABC transporter complex SsuABC involved in aliphatic sulfonates import. Responsible for energy coupling to the transport system. In Frankia alni (strain DSM 45986 / CECT 9034 / ACN14a), this protein is Aliphatic sulfonates import ATP-binding protein SsuB 2.